The sequence spans 102 residues: Small ribosomal subunit protein uS10 (102 aa).

The protein belongs to the universal ribosomal protein uS10 family. In terms of assembly, part of the 30S ribosomal subunit.

Functionally, involved in the binding of tRNA to the ribosomes. The polypeptide is Small ribosomal subunit protein uS10 (Pelobacter propionicus (strain DSM 2379 / NBRC 103807 / OttBd1)).